The chain runs to 170 residues: MDLKKYVTIVPDYPKEGVQFKDITTLMDKGDVYRYATDQIVEYAKEKEIDLVVGPEARGFIIGCPVAYALGVGFAPVRKEGKLPREVIKVDYGLEYGKDVLTIHKDAILPGQRVLITDDLLATGGTIEATIKLVEELGGVVAGIAFLIELSYLDGRDKLDDYDILTLMKY.

Belongs to the purine/pyrimidine phosphoribosyltransferase family. In terms of assembly, homodimer.

The protein localises to the cytoplasm. The enzyme catalyses AMP + diphosphate = 5-phospho-alpha-D-ribose 1-diphosphate + adenine. The protein operates within purine metabolism; AMP biosynthesis via salvage pathway; AMP from adenine: step 1/1. In terms of biological role, catalyzes a salvage reaction resulting in the formation of AMP, that is energically less costly than de novo synthesis. The chain is Adenine phosphoribosyltransferase from Bacillus velezensis (strain DSM 23117 / BGSC 10A6 / LMG 26770 / FZB42) (Bacillus amyloliquefaciens subsp. plantarum).